We begin with the raw amino-acid sequence, 395 residues long: uncharacterized protein (395 aa).

Residues 1 to 18 form the signal peptide; sequence MKHVIMLYFIAAATLFSS. Cys19 carries N-palmitoyl cysteine lipidation. Cys19 carries the S-diacylglycerol cysteine lipid modification.

The protein localises to the cell outer membrane. In terms of biological role, may be involved in ulvan degradation. Ulvan is the main polysaccharide component of the Ulvales (green seaweed) cell wall. It is composed of disaccharide building blocks comprising 3-sulfated rhamnose (Rha3S) linked to D-glucuronic acid (GlcA), L-iduronic acid (IduA), or D-xylose (Xyl). This is an uncharacterized protein from Formosa agariphila (strain DSM 15362 / KCTC 12365 / LMG 23005 / KMM 3901 / M-2Alg 35-1).